Consider the following 308-residue polypeptide: Limonin dehydrogenase (308 aa).

Belongs to the aldehyde dehydrogenase family.

The protein resides in the periplasm. Its activity is regulated as follows. Completely inhibited by HgCl(2), CoCl(2) and CaCl(2). Functionally, catalyzes the NAD(+)-dependent conversion of limonin. This Pseudomonas putida (Arthrobacter siderocapsulatus) protein is Limonin dehydrogenase.